The primary structure comprises 149 residues: Large ribosomal subunit protein bL9 (149 aa).

Belongs to the bacterial ribosomal protein bL9 family.

Functionally, binds to the 23S rRNA. This Geobacillus thermodenitrificans (strain NG80-2) protein is Large ribosomal subunit protein bL9.